The primary structure comprises 354 residues: Guanine nucleotide-binding protein G(i) subunit alpha-1 (354 aa).

Gly-2 carries the N-myristoyl glycine lipid modification. A lipid anchor (S-palmitoyl cysteine) is attached at Cys-3. The G-alpha domain occupies 32 to 354 (REVKLLLLGA…KNNLKDCGLF (323 aa)). The interval 35 to 48 (KLLLLGAGESGKST) is G1 motif. Residues 43 to 48 (ESGKST), 150 to 151 (DS), and 175 to 178 (LRTR) each bind GTP. Ser-47 contacts Mg(2+). The interval 173-181 (DVLRTRVKT) is G2 motif. Mg(2+) is bound at residue Thr-181. Positions 196 to 205 (FKMFDVGGQR) are G3 motif. GTP contacts are provided by residues 200–204 (DVGGQ), 269–272 (NKKD), and Ala-326. Residues 265-272 (ILFLNKKD) are G4 motif. Residues 324-329 (TCATDT) are G5 motif.

It belongs to the G-alpha family. G(i/o/t/z) subfamily. As to quaternary structure, heterotrimeric G proteins are composed of 3 units; alpha, beta and gamma. The alpha chain contains the guanine nucleotide binding site. Part of a spindle orientation complex. Identified in complex with the beta subunit GNB1 and the gamma subunit GNG1. Identified in complex with the beta subunit GNB1 and the gamma subunit GNG2. GTP binding causes dissociation of the heterotrimer, liberating the individual subunits so that they can interact with downstream effector proteins. Post-translationally, myristoylation at Gly-2 is required for membrane anchoring before palmitoylation. In terms of processing, palmitoylation at Cys-3 varies with membrane lipid composition.

The protein resides in the nucleus. The protein localises to the cytoplasm. It localises to the cell membrane. Its subcellular location is the cytoskeleton. It is found in the microtubule organizing center. The protein resides in the centrosome. The protein localises to the cell cortex. It localises to the membrane. It catalyses the reaction GTP + H2O = GDP + phosphate + H(+). In terms of biological role, guanine nucleotide-binding proteins (G proteins) function as transducers downstream of G protein-coupled receptors (GPCRs) in numerous signaling cascades. The alpha chain contains the guanine nucleotide binding site and alternates between an active, GTP-bound state and an inactive, GDP-bound state. Signaling by an activated GPCR promotes GDP release and GTP binding. The alpha subunit has a low GTPase activity that converts bound GTP to GDP, thereby terminating the signal. Both GDP release and GTP hydrolysis are modulated by numerous regulatory proteins. Signaling is mediated via effector proteins, such as adenylate cyclase. Inhibits adenylate cyclase activity, leading to decreased intracellular cAMP levels. Required for cortical dynein-dynactin complex recruitment during metaphase. This chain is Guanine nucleotide-binding protein G(i) subunit alpha-1 (gnai1), found in Oryzias latipes (Japanese rice fish).